The chain runs to 105 residues: Translation initiation factor 1A (105 aa).

Positions 18–92 (IRVKLPNKRI…DKCDIIYRYT (75 aa)) constitute an S1-like domain.

It belongs to the eIF-1A family.

Its function is as follows. Seems to be required for maximal rate of protein biosynthesis. Enhances ribosome dissociation into subunits and stabilizes the binding of the initiator Met-tRNA(I) to 40 S ribosomal subunits. This Methanocorpusculum labreanum (strain ATCC 43576 / DSM 4855 / Z) protein is Translation initiation factor 1A (eIF1A).